Reading from the N-terminus, the 650-residue chain is Acetyl-coenzyme A synthetase (650 aa).

CoA contacts are provided by residues 190 to 193, Thr308, and Asn332; that span reads RGGR. ATP is bound by residues 384-386, 408-413, Asp497, and Arg512; these read GEP and DTWWQT. Ser520 contributes to the CoA binding site. Arg523 lines the ATP pocket. The Mg(2+) site is built by Val534, His536, and Val539. Arg581 contributes to the CoA binding site. Position 606 is an N6-acetyllysine (Lys606).

Belongs to the ATP-dependent AMP-binding enzyme family. Requires Mg(2+) as cofactor. Post-translationally, acetylated. Deacetylation by the SIR2-homolog deacetylase activates the enzyme.

It catalyses the reaction acetate + ATP + CoA = acetyl-CoA + AMP + diphosphate. Its function is as follows. Catalyzes the conversion of acetate into acetyl-CoA (AcCoA), an essential intermediate at the junction of anabolic and catabolic pathways. AcsA undergoes a two-step reaction. In the first half reaction, AcsA combines acetate with ATP to form acetyl-adenylate (AcAMP) intermediate. In the second half reaction, it can then transfer the acetyl group from AcAMP to the sulfhydryl group of CoA, forming the product AcCoA. The protein is Acetyl-coenzyme A synthetase of Bradyrhizobium sp. (strain ORS 278).